The chain runs to 139 residues: D-ribose pyranase (139 aa).

His20 acts as the Proton donor in catalysis. Residues Asp28, His106, and 128-130 (YAN) contribute to the substrate site.

The protein belongs to the RbsD / FucU family. RbsD subfamily. As to quaternary structure, homodecamer.

Its subcellular location is the cytoplasm. It carries out the reaction beta-D-ribopyranose = beta-D-ribofuranose. It functions in the pathway carbohydrate metabolism; D-ribose degradation; D-ribose 5-phosphate from beta-D-ribopyranose: step 1/2. In terms of biological role, catalyzes the interconversion of beta-pyran and beta-furan forms of D-ribose. The chain is D-ribose pyranase from Shewanella pealeana (strain ATCC 700345 / ANG-SQ1).